The chain runs to 105 residues: Large ribosomal subunit protein uL24 (105 aa).

This sequence belongs to the universal ribosomal protein uL24 family. As to quaternary structure, part of the 50S ribosomal subunit.

Its function is as follows. One of two assembly initiator proteins, it binds directly to the 5'-end of the 23S rRNA, where it nucleates assembly of the 50S subunit. One of the proteins that surrounds the polypeptide exit tunnel on the outside of the subunit. In Buchnera aphidicola subsp. Cinara cedri (strain Cc), this protein is Large ribosomal subunit protein uL24.